A 92-amino-acid chain; its full sequence is uncharacterized protein (92 aa).

This is an uncharacterized protein from Bacillus subtilis (strain 168).